A 444-amino-acid polypeptide reads, in one-letter code: Baeyer-Villiger oxidase ptaJ (444 aa).

This sequence belongs to the questin oxidase family. NADPH serves as cofactor.

Its pathway is secondary metabolite biosynthesis. Functionally, baeyer-Villiger oxidase; part of the gene cluster that mediates the biosynthesis of pestheic acid, a diphenyl ether which is a biosynthetic precursor of the unique chloropupukeananes. The biosynthesis initiates from condensation of acetate and malonate units catalyzed by the non-reducing PKS ptaA. As the ptaA protein is TE/CLC domain-deficient, hydrolysis and Claisen cyclization of the polyketide could be catalyzed by ptaB containing a beta-lactamase domain. The ptaB protein might hydrolyze the thioester bond between the ACP of ptaA and the intermediate to release atrochrysone carboxylic acid, which is spontaneously dehydrated to form endocrocin anthrone. Endocrocin anthrone is then converted to endocrocin, catalyzed by the anthrone oxygenase ptaC. Spontaneous decarboxylation of endocrocin occurs to generate emodin. An O-methyltransferase (ptaH or ptaI) could methylate emodin to form physcion. PtaJ could then catalyze the oxidative cleavage of physcion, and rotation of the intermediate could then afford desmethylisosulochrin. PtaF, a putative NADH-dependent oxidoreductase, might also participate in the oxidative cleavage step. Desmethylisosulochrin is then transformed by another O-methyltransferase (ptaH or ptaI) to form isosulochrin. Chlorination of isosulochrin by ptaM in the cyclohexadienone B ring then produces chloroisosulochrin. PtaE is responsible for the oxidative coupling reactions of both benzophenones isosulouchrin and chloroisosulouchrin to RES-1214-1 and pestheic acid respectively, regardless of chlorination. This chain is Baeyer-Villiger oxidase ptaJ, found in Pestalotiopsis fici (strain W106-1 / CGMCC3.15140).